The sequence spans 720 residues: Aminopeptidase RNPEPL1 (720 aa).

321–325 provides a ligand contact to substrate; it reads VAMEN. H348 contributes to the Zn(2+) binding site. E349 serves as the catalytic Proton acceptor. Zn(2+)-binding residues include H352 and E371. The tract at residues 671–708 is disordered; it reads GLGPSAEPSTEPSTDLGGAEADTNPDSPALLLGDEAPS.

Belongs to the peptidase M1 family. It depends on Zn(2+) as a cofactor.

It carries out the reaction Release of N-terminal amino acids, preferentially methionine, from peptides and arylamides.. Broad specificity aminopeptidase which preferentially hydrolyzes an N-terminal methionine, citrulline or glutamine. The chain is Aminopeptidase RNPEPL1 from Mus musculus (Mouse).